We begin with the raw amino-acid sequence, 347 residues long: Magnesium-protoporphyrin IX monomethyl ester [oxidative] cyclase (347 aa).

It belongs to the AcsF family. Fe cation is required as a cofactor.

It catalyses the reaction Mg-protoporphyrin IX 13-monomethyl ester + 3 NADPH + 3 O2 + 2 H(+) = 3,8-divinyl protochlorophyllide a + 3 NADP(+) + 5 H2O. Its pathway is porphyrin-containing compound metabolism; chlorophyll biosynthesis (light-independent). In terms of biological role, catalyzes the formation of the isocyclic ring in chlorophyll biosynthesis. Mediates the cyclase reaction, which results in the formation of divinylprotochlorophyllide (Pchlide) characteristic of all chlorophylls from magnesium-protoporphyrin IX 13-monomethyl ester (MgPMME). In Prochlorococcus marinus (strain SARG / CCMP1375 / SS120), this protein is Magnesium-protoporphyrin IX monomethyl ester [oxidative] cyclase.